Consider the following 76-residue polypeptide: Kappa-scoloptoxin(15)-Ssd3a (76 aa).

Positions 1-23 are cleaved as a signal peptide; that stretch reads MEGKIIFICFLVVLLTLPELISS.

Contains 2 disulfide bonds. In terms of tissue distribution, expressed by the venom gland.

Its subcellular location is the secreted. Acts as a voltage-gated potassium channel inhibitor. The sequence is that of Kappa-scoloptoxin(15)-Ssd3a from Scolopendra dehaani (Thai centipede).